The following is a 404-amino-acid chain: CCA-adding enzyme (404 aa).

G27 and R30 together coordinate ATP. CTP contacts are provided by G27 and R30. The Mg(2+) site is built by D40 and D42. The ATP site is built by R111, D154, R157, R160, and R163. CTP-binding residues include R111, D154, R157, R160, and R163.

This sequence belongs to the tRNA nucleotidyltransferase/poly(A) polymerase family. Bacterial CCA-adding enzyme type 3 subfamily. Homodimer. It depends on Mg(2+) as a cofactor.

The enzyme catalyses a tRNA precursor + 2 CTP + ATP = a tRNA with a 3' CCA end + 3 diphosphate. It catalyses the reaction a tRNA with a 3' CCA end + 2 CTP + ATP = a tRNA with a 3' CCACCA end + 3 diphosphate. Functionally, catalyzes the addition and repair of the essential 3'-terminal CCA sequence in tRNAs without using a nucleic acid template. Adds these three nucleotides in the order of C, C, and A to the tRNA nucleotide-73, using CTP and ATP as substrates and producing inorganic pyrophosphate. tRNA 3'-terminal CCA addition is required both for tRNA processing and repair. Also involved in tRNA surveillance by mediating tandem CCA addition to generate a CCACCA at the 3' terminus of unstable tRNAs. While stable tRNAs receive only 3'-terminal CCA, unstable tRNAs are marked with CCACCA and rapidly degraded. In Geobacillus kaustophilus (strain HTA426), this protein is CCA-adding enzyme.